We begin with the raw amino-acid sequence, 197 residues long: Rac-like GTP-binding protein 5 (197 aa).

A GTP-binding site is contributed by 13 to 20 (GDGAVGKT). An Effector region motif is present at residues 35–43 (YVPTVFDNF). Residues 60–64 (DTAGQ) and 118–121 (TKLD) contribute to the GTP site. Cys-194 is modified (cysteine methyl ester). The S-geranylgeranyl cysteine moiety is linked to residue Cys-194. The propeptide at 195-197 (AIL) is removed in mature form.

This sequence belongs to the small GTPase superfamily. Rho family.

The protein resides in the cytoplasm. The protein localises to the membrane. Functionally, inactive GDP-bound Rho GTPases reside in the cytosol, are found in a complex with Rho GDP-dissociation inhibitors (Rho GDIs), and are released from the GDI protein in order to translocate to membranes upon activation. The sequence is that of Rac-like GTP-binding protein 5 (RAC5) from Oryza sativa subsp. japonica (Rice).